Consider the following 232-residue polypeptide: Putative dimethylsulfoniopropionate lyase DddL (232 aa).

A divalent metal cation is bound by residues His154, Glu159, Tyr161, and His190.

This sequence belongs to the non-heme iron-dependent dioxygenase family. In terms of assembly, homodimer. It depends on a divalent metal cation as a cofactor.

It carries out the reaction S,S-dimethyl-beta-propiothetin = acrylate + dimethyl sulfide + H(+). In terms of biological role, may cleave dimethylsulfoniopropionate (DMSP), releasing dimethyl sulfide (DMS). DMS is the principal form by which sulfur is transported from oceans to the atmosphere. The real activity of the protein is however subject to debate and it is unclear whether it constitutes a real dimethylsulfoniopropionate lyase in vivo. This chain is Putative dimethylsulfoniopropionate lyase DddL (dddL), found in Cereibacter sphaeroides (strain ATCC 17023 / DSM 158 / JCM 6121 / CCUG 31486 / LMG 2827 / NBRC 12203 / NCIMB 8253 / ATH 2.4.1.) (Rhodobacter sphaeroides).